A 418-amino-acid polypeptide reads, in one-letter code: Tyrosine--tRNA ligase (418 aa).

Residue Tyr34 participates in L-tyrosine binding. The 'HIGH' region motif lies at 39–48 (PTADSLHLGH). Residues Tyr169 and Gln173 each coordinate L-tyrosine. A 'KMSKS' region motif is present at residues 229 to 233 (KFGKS). Lys232 lines the ATP pocket. The S4 RNA-binding domain occupies 352–418 (LNLVDMLVTA…GKKKYAVLTY (67 aa)).

The protein belongs to the class-I aminoacyl-tRNA synthetase family. TyrS type 1 subfamily. In terms of assembly, homodimer.

It is found in the cytoplasm. The catalysed reaction is tRNA(Tyr) + L-tyrosine + ATP = L-tyrosyl-tRNA(Tyr) + AMP + diphosphate + H(+). Functionally, catalyzes the attachment of tyrosine to tRNA(Tyr) in a two-step reaction: tyrosine is first activated by ATP to form Tyr-AMP and then transferred to the acceptor end of tRNA(Tyr). In Streptococcus pyogenes serotype M12 (strain MGAS2096), this protein is Tyrosine--tRNA ligase.